The chain runs to 331 residues: Major outer membrane protein P.IB (331 aa).

An N-terminal signal peptide occupies residues 1-19 (MKKSLIALTLAALPVAAMA).

The protein belongs to the Gram-negative porin family. Homotrimer.

It localises to the cell outer membrane. Functionally, serves as a slightly cation selective porin. This Neisseria meningitidis serogroup B protein is Major outer membrane protein P.IB (porB).